The primary structure comprises 133 residues: MALQNLTPAPGSTHATKRLGRGQGSGNGKTAGKGNKGQRARKGYNEKRGFEGGQQPLQRRLPKVGFTSKFEKPYVINVEKITAIKELSEITVATIASVHKISKSVTKIKLIGVSAKELASKVKDENVSVSGSK.

The tract at residues 1-58 (MALQNLTPAPGSTHATKRLGRGQGSGNGKTAGKGNKGQRARKGYNEKRGFEGGQQPLQ) is disordered. A compositionally biased stretch (gly residues) spans 21–35 (RGQGSGNGKTAGKGN).

This sequence belongs to the universal ribosomal protein uL15 family. Part of the 50S ribosomal subunit.

In terms of biological role, binds to the 23S rRNA. This is Large ribosomal subunit protein uL15 from Campylobacter curvus (strain 525.92).